The following is a 453-amino-acid chain: UDP-N-acetylmuramoylalanine--D-glutamate ligase (453 aa).

An ATP-binding site is contributed by 119–125 (GTNGKTT).

This sequence belongs to the MurCDEF family.

The protein localises to the cytoplasm. It catalyses the reaction UDP-N-acetyl-alpha-D-muramoyl-L-alanine + D-glutamate + ATP = UDP-N-acetyl-alpha-D-muramoyl-L-alanyl-D-glutamate + ADP + phosphate + H(+). It functions in the pathway cell wall biogenesis; peptidoglycan biosynthesis. In terms of biological role, cell wall formation. Catalyzes the addition of glutamate to the nucleotide precursor UDP-N-acetylmuramoyl-L-alanine (UMA). The sequence is that of UDP-N-acetylmuramoylalanine--D-glutamate ligase from Syntrophus aciditrophicus (strain SB).